Consider the following 196-residue polypeptide: uncharacterized protein (196 aa).

The signal sequence occupies residues 1–27 (MSVLSRAVQLAFVALGLCLFFSNLVAA).

Its subcellular location is the secreted. This is an uncharacterized protein from Arthroderma benhamiae (strain ATCC MYA-4681 / CBS 112371) (Trichophyton mentagrophytes).